We begin with the raw amino-acid sequence, 298 residues long: MQQQLDAYCAHLRSERQVSPHTLQAYRRDLEKVLGFCEKMQVRSWTDLDIQGLRSLIARLHQQGQSSRSLARLLSAVRGLYHYLNREGLCTHDPANGLAPPKGERRLPKTLDTDRTLQLLDGAVEDDFLAHRDQAILELFYSCGLRLSELTSLNLDQLDLADGLVQVHGKGSKTRVLPVGKKARSALEQWLPLRALSNPPDGALFVSQKGRRLGPRAIQLRVKAAGERELGQNLHPHMLRHSFASHLLESSQDLRAVQELLGHSDIKTTQIYTHLDFQHLAAVYDSAHPRAKRNKGGE.

One can recognise a Core-binding (CB) domain in the interval 1 to 85 (MQQQLDAYCA…AVRGLYHYLN (85 aa)). One can recognise a Tyr recombinase domain in the interval 106-285 (RLPKTLDTDR…DFQHLAAVYD (180 aa)). Catalysis depends on residues R146, K170, H237, R240, and H263. The active-site O-(3'-phospho-DNA)-tyrosine intermediate is Y272.

The protein belongs to the 'phage' integrase family. XerC subfamily. Forms a cyclic heterotetrameric complex composed of two molecules of XerC and two molecules of XerD.

It is found in the cytoplasm. Site-specific tyrosine recombinase, which acts by catalyzing the cutting and rejoining of the recombining DNA molecules. The XerC-XerD complex is essential to convert dimers of the bacterial chromosome into monomers to permit their segregation at cell division. It also contributes to the segregational stability of plasmids. This chain is Tyrosine recombinase XerC, found in Pseudomonas fluorescens (strain ATCC BAA-477 / NRRL B-23932 / Pf-5).